The sequence spans 248 residues: Probable transcriptional regulatory protein LAR_0538 (248 aa).

The tract at residues 1 to 22 is disordered; sequence MSGHSKWHNIQGRKNAQDAKRG.

It belongs to the TACO1 family.

Its subcellular location is the cytoplasm. This Limosilactobacillus reuteri subsp. reuteri (strain JCM 1112) (Lactobacillus reuteri) protein is Probable transcriptional regulatory protein LAR_0538.